We begin with the raw amino-acid sequence, 43 residues long: Potassium channel toxin gamma-KTx 4.2 (43 aa).

Disulfide bonds link C5–C23, C11–C34, C20–C39, and C24–C41.

This sequence belongs to the ergtoxin family. Gamma-KTx 4 subfamily. In terms of tissue distribution, expressed by the venom gland.

It is found in the secreted. Its function is as follows. Reversibly blocks Kv11/ERG potassium channels. The protein is Potassium channel toxin gamma-KTx 4.2 of Centruroides noxius (Mexican scorpion).